Here is a 256-residue protein sequence, read N- to C-terminus: Triosephosphate isomerase (256 aa).

10–12 serves as a coordination point for substrate; sequence NWK. Residue H97 is the Electrophile of the active site. E169 functions as the Proton acceptor in the catalytic mechanism. Residues G175, S214, and 235–236 contribute to the substrate site; that span reads GG.

It belongs to the triosephosphate isomerase family. Homodimer.

Its subcellular location is the cytoplasm. The enzyme catalyses D-glyceraldehyde 3-phosphate = dihydroxyacetone phosphate. The protein operates within carbohydrate biosynthesis; gluconeogenesis. It functions in the pathway carbohydrate degradation; glycolysis; D-glyceraldehyde 3-phosphate from glycerone phosphate: step 1/1. Functionally, involved in the gluconeogenesis. Catalyzes stereospecifically the conversion of dihydroxyacetone phosphate (DHAP) to D-glyceraldehyde-3-phosphate (G3P). In Haemophilus ducreyi (strain 35000HP / ATCC 700724), this protein is Triosephosphate isomerase.